The primary structure comprises 207 residues: NADH-quinone oxidoreductase subunit C (207 aa).

It belongs to the complex I 30 kDa subunit family. NDH-1 is composed of 14 different subunits. Subunits NuoB, C, D, E, F, and G constitute the peripheral sector of the complex.

The protein localises to the cell inner membrane. The enzyme catalyses a quinone + NADH + 5 H(+)(in) = a quinol + NAD(+) + 4 H(+)(out). NDH-1 shuttles electrons from NADH, via FMN and iron-sulfur (Fe-S) centers, to quinones in the respiratory chain. The immediate electron acceptor for the enzyme in this species is believed to be ubiquinone. Couples the redox reaction to proton translocation (for every two electrons transferred, four hydrogen ions are translocated across the cytoplasmic membrane), and thus conserves the redox energy in a proton gradient. This Thermus thermophilus (strain ATCC BAA-163 / DSM 7039 / HB27) protein is NADH-quinone oxidoreductase subunit C.